The chain runs to 389 residues: Flap endonuclease 1 (389 aa).

Positions Met1–Arg105 are N-domain. Asp34 is a binding site for Mg(2+). Arg71 contributes to the DNA binding site. The Mg(2+) site is built by Asp87, Glu159, Glu161, Asp180, and Asp182. The I-domain stretch occupies residues Glu123–His254. Glu159 serves as a coordination point for DNA. 2 residues coordinate DNA: Gly232 and Asp234. A Mg(2+)-binding site is contributed by Asp234. The interaction with PCNA stretch occupies residues Ser338–Phe346. The interval Ile356–Asn389 is disordered.

Belongs to the XPG/RAD2 endonuclease family. FEN1 subfamily. In terms of assembly, interacts with PCNA. Three molecules of FEN1 bind to one PCNA trimer with each molecule binding to one PCNA monomer. PCNA stimulates the nuclease activity without altering cleavage specificity. Requires Mg(2+) as cofactor. Post-translationally, phosphorylated. Phosphorylation upon DNA damage induces relocalization to the nuclear plasma.

Its subcellular location is the nucleus. The protein localises to the nucleolus. The protein resides in the nucleoplasm. It localises to the mitochondrion. Its function is as follows. Structure-specific nuclease with 5'-flap endonuclease and 5'-3' exonuclease activities involved in DNA replication and repair. During DNA replication, cleaves the 5'-overhanging flap structure that is generated by displacement synthesis when DNA polymerase encounters the 5'-end of a downstream Okazaki fragment. It enters the flap from the 5'-end and then tracks to cleave the flap base, leaving a nick for ligation. Also involved in the long patch base excision repair (LP-BER) pathway, by cleaving within the apurinic/apyrimidinic (AP) site-terminated flap. Acts as a genome stabilization factor that prevents flaps from equilibrating into structures that lead to duplications and deletions. Also possesses 5'-3' exonuclease activity on nicked or gapped double-stranded DNA, and exhibits RNase H activity. Also involved in replication and repair of rDNA and in repairing mitochondrial DNA. This chain is Flap endonuclease 1, found in Ostreococcus lucimarinus (strain CCE9901).